The following is a 298-amino-acid chain: DNA-3-methyladenine glycosylase (298 aa).

Residues 1 to 17 (MVTPALQMKKPKQFCRR) constitute a mitochondrion transit peptide. Positions 1 to 65 (MVTPALQMKK…CPRERCLGPP (65 aa)) are disordered. Residues 9–25 (KKPKQFCRRMGQKKQRP) show a composition bias toward basic residues. Phosphoserine occurs at positions 78 and 252.

This sequence belongs to the DNA glycosylase MPG family. As to quaternary structure, binds MBD1. Binds SSBP1.

Its subcellular location is the cytoplasm. The protein resides in the mitochondrion matrix. It is found in the mitochondrion nucleoid. It localises to the nucleus. It carries out the reaction Hydrolysis of alkylated DNA, releasing 3-methyladenine, 3-methylguanine, 7-methylguanine and 7-methyladenine.. With respect to regulation, binding to SSBP1 in mitochondria inhibits glycosylase activity in the context of a single-stranded DNA (ssDNA), but not a double-stranded DNA (dsDNA) substrates. Hydrolysis of the deoxyribose N-glycosidic bond to excise 3-methyladenine, and 7-methylguanine from the damaged DNA polymer formed by alkylation lesions. The sequence is that of DNA-3-methyladenine glycosylase (MPG) from Homo sapiens (Human).